The following is a 448-amino-acid chain: Probable intron-encoded endonuclease bI1 (448 aa).

A cob exon 1 encoded region spans residues 1-132 (MRLLKSHPLL…LMMATAFLGY (132 aa)). The next 3 membrane-spanning stretches (helical) occupy residues 32 to 52 (FGSL…TLAM), 86 to 106 (ASAF…YGSY), and 112 to 132 (LVWA…FLGY). The cob intron 1 encoded stretch occupies residues 133 to 448 (QHSPKWFDIS…QWIVEDFSDK (316 aa)). The GIY-YIG domain maps to 230 to 321 (DLSGVYMIIN…LKLLVPNYNI (92 aa)).

The protein to endonucleases of group I introns of fungi and phage. Post-translationally, the mature protein may arise from proteolytic cleavage of an in-frame translation of cob exon 1 plus intron 1, containing the bI1 open reading frame.

Its subcellular location is the mitochondrion inner membrane. In terms of biological role, mitochondrial DNA endonuclease involved in intron homing. The protein is Probable intron-encoded endonuclease bI1 (bI1) of Neurospora crassa (strain ATCC 24698 / 74-OR23-1A / CBS 708.71 / DSM 1257 / FGSC 987).